Consider the following 350-residue polypeptide: Adenine deaminase (350 aa).

3 residues coordinate Zn(2+): His24, His26, and His207. Catalysis depends on Glu210, which acts as the Proton donor. Residue Asp288 coordinates Zn(2+). Asp289 is a binding site for substrate.

This sequence belongs to the metallo-dependent hydrolases superfamily. Adenosine and AMP deaminases family. Adenine deaminase type 2 subfamily. Zn(2+) is required as a cofactor.

The enzyme catalyses adenine + H2O + H(+) = hypoxanthine + NH4(+). Functionally, catalyzes the hydrolytic deamination of adenine to hypoxanthine. Plays an important role in the purine salvage pathway and in nitrogen catabolism. This is Adenine deaminase from Paraburkholderia phytofirmans (strain DSM 17436 / LMG 22146 / PsJN) (Burkholderia phytofirmans).